A 505-amino-acid polypeptide reads, in one-letter code: 2,3-bisphosphoglycerate-independent phosphoglycerate mutase (505 aa).

Residues aspartate 11 and serine 61 each contribute to the Mn(2+) site. Serine 61 (phosphoserine intermediate) is an active-site residue. Residues histidine 122, arginine 152–aspartate 153, arginine 184, arginine 190, arginine 258–arginine 261, and lysine 331 each bind substrate. Mn(2+) is bound by residues aspartate 396, histidine 400, aspartate 437, histidine 438, and histidine 455.

This sequence belongs to the BPG-independent phosphoglycerate mutase family. In terms of assembly, monomer. Mn(2+) serves as cofactor.

It catalyses the reaction (2R)-2-phosphoglycerate = (2R)-3-phosphoglycerate. Its pathway is carbohydrate degradation; glycolysis; pyruvate from D-glyceraldehyde 3-phosphate: step 3/5. Functionally, catalyzes the interconversion of 2-phosphoglycerate and 3-phosphoglycerate. This is 2,3-bisphosphoglycerate-independent phosphoglycerate mutase from Mesomycoplasma hyopneumoniae (strain 7448) (Mycoplasma hyopneumoniae).